We begin with the raw amino-acid sequence, 342 residues long: Dihydroorotase (342 aa).

Zn(2+)-binding residues include H13 and H15. Residues 15-17 and N41 each bind substrate; that span reads HLR. Residues K99, H136, and H174 each contribute to the Zn(2+) site. Residue K99 is modified to N6-carboxylysine. H136 lines the substrate pocket. L218 provides a ligand contact to substrate. D246 serves as a coordination point for Zn(2+). The active site involves D246. Substrate contacts are provided by H250 and A262.

Belongs to the metallo-dependent hydrolases superfamily. DHOase family. Class II DHOase subfamily. In terms of assembly, homodimer. Requires Zn(2+) as cofactor.

The enzyme catalyses (S)-dihydroorotate + H2O = N-carbamoyl-L-aspartate + H(+). Its pathway is pyrimidine metabolism; UMP biosynthesis via de novo pathway; (S)-dihydroorotate from bicarbonate: step 3/3. Catalyzes the reversible cyclization of carbamoyl aspartate to dihydroorotate. The protein is Dihydroorotase of Synechocystis sp. (strain ATCC 27184 / PCC 6803 / Kazusa).